The chain runs to 526 residues: Dye-decolorizing peroxidase (526 aa).

A signal peptide spans 1–21; sequence MRKSISTFILLSVLSVGQLVA. The propeptide occupies 22 to 63; that stretch reads ARPRSTNAPPRRRTPQPRRTTSLFINPPALPDLPTVQAVDKL. Residue N186 is glycosylated (N-linked (GlcNAc...) asparagine). The Proton acceptor role is filled by D231. The N-linked (GlcNAc...) asparagine glycan is linked to N367. H376 contributes to the heme binding site. N473 and N484 each carry an N-linked (GlcNAc...) asparagine glycan.

This sequence belongs to the DyP-type peroxidase family. Heme b serves as cofactor.

The protein localises to the secreted. It carries out the reaction Reactive Blue 5 + 2 H2O2 = 2,2'-disulfonyl azobenzene + 3-[(4-amino-6-chloro-1,3,5-triazin-2-yl)amino]benzenesulfonate + phthalate + 2 H2O + 2 H(+). The enzyme catalyses 2 a phenolic donor + H2O2 = 2 a phenolic radical donor + 2 H2O. Manganese-independent peroxidase that is able to convert a large number of compounds, but its physiological substrate is not known. In addition to classic peroxidase substrates (e.g. 2,6-dimethoxyphenol), oxidizes dyes such as Reactive Blue 5 and Reactive Black 5. The sequence is that of Dye-decolorizing peroxidase from Mycena epipterygia (Yellow-stemmed mycena).